Reading from the N-terminus, the 170-residue chain is Tubulin polymerization-promoting protein family member 2 (170 aa).

The tract at residues 127–170 (TGTHKERFDESGKGKGIAGREEMTDNTGYVSGYKGSGTYDKKTK) is disordered. Over residues 129–149 (THKERFDESGKGKGIAGREEM) the composition is skewed to basic and acidic residues.

It belongs to the TPPP family. In terms of tissue distribution, expressed in spermatids. Detected in liver cancer (at protein level).

The protein resides in the cytoplasm. It localises to the cytosol. Its subcellular location is the cell projection. It is found in the cilium. The protein localises to the flagellum. Probable regulator of microtubule dynamics required for sperm motility. In contrast to other members of the family, has no microtubule bundling activity. This Homo sapiens (Human) protein is Tubulin polymerization-promoting protein family member 2.